Reading from the N-terminus, the 398-residue chain is Putative tyrosine-protein phosphatase C15H7.3 (398 aa).

Basic residues predominate over residues 1–15 (MERSQKSARKKKKTS). The interval 1–114 (MERSQKSARK…EPWSEEEPAK (114 aa)) is disordered. The span at 18–40 (GNDRSIRSERKSKQKKPAGEKSQ) shows a compositional bias: basic and acidic residues. Residues 41–50 (KSRRTRKSRG) are compositionally biased toward basic residues. Positions 55 to 73 (GFTSRETIQPSSSGQSEGT) are enriched in polar residues. The segment covering 74–114 (TRMDDQKDEKKDDKKEEKKEERKEEKKEEVKEPWSEEEPAK) has biased composition (basic and acidic residues). Residues 125 to 376 (TNVGGTFKQT…GTVHRSMACW (252 aa)) form the Tyrosine-protein phosphatase domain.

Belongs to the protein-tyrosine phosphatase family. Non-receptor class subfamily.

It catalyses the reaction O-phospho-L-tyrosyl-[protein] + H2O = L-tyrosyl-[protein] + phosphate. This Caenorhabditis elegans protein is Putative tyrosine-protein phosphatase C15H7.3.